Reading from the N-terminus, the 318-residue chain is Probable metal transport system membrane protein CT_070 (318 aa).

Transmembrane regions (helical) follow at residues Met1–Phe21, Ile39–Val59, Ala64–Phe84, Gln94–Ile114, Ala124–Leu144, Ile170–Cys190, Ile196–Leu216, Ala226–Ile246, Glu252–Ser272, and Thr285–Cys305.

The protein belongs to the ABC-3 integral membrane protein family.

The protein localises to the cell inner membrane. Its function is as follows. Part of an ATP-driven transport system CT_067/CT_068/CT_069/CT_070 for a metal. The chain is Probable metal transport system membrane protein CT_070 from Chlamydia trachomatis serovar D (strain ATCC VR-885 / DSM 19411 / UW-3/Cx).